The following is a 410-amino-acid chain: Multidrug resistance protein MdtM (410 aa).

Residues methionine 1–threonine 11 lie on the Cytoplasmic side of the membrane. The chain crosses the membrane as a helical span at residues leucine 12–isoleucine 32. At glutamine 33–serine 48 the chain is on the periplasmic side. A helical membrane pass occupies residues leucine 49–glycine 69. At proline 70 to arginine 78 the chain is on the cytoplasmic side. A helical transmembrane segment spans residues proline 79–threonine 99. The Periplasmic portion of the chain corresponds to serine 100–glutamine 103. Residues phenylalanine 104–valine 124 form a helical membrane-spanning segment. Residues threonine 125–alanine 140 are Cytoplasmic-facing. A helical transmembrane segment spans residues isoleucine 141–methionine 161. The Periplasmic segment spans residues histidine 162–lysine 167. The helical transmembrane segment at valine 168–methionine 188 threads the bilayer. The Cytoplasmic segment spans residues proline 189–leucine 216. A helical transmembrane segment spans residues phenylalanine 217–valine 237. Residues serine 238–serine 251 lie on the Periplasmic side of the membrane. The helical transmembrane segment at glutamine 252 to alanine 272 threads the bilayer. Topologically, residues arginine 273–arginine 282 are cytoplasmic. The chain crosses the membrane as a helical span at residues phenylalanine 283–leucine 303. Residues leucine 304–histidine 307 are Periplasmic-facing. Residues valine 308–proline 328 traverse the membrane as a helical segment. Residues threonine 329–serine 348 lie on the Cytoplasmic side of the membrane. The chain crosses the membrane as a helical span at residues leucine 349–phenylalanine 369. Residues asparagine 370–arginine 373 lie on the Periplasmic side of the membrane. Residues leucine 374–leucine 394 form a helical membrane-spanning segment. Over leucine 395–glutamine 410 the chain is Cytoplasmic.

Belongs to the major facilitator superfamily. Monomer.

The protein localises to the cell inner membrane. It carries out the reaction Na(+)(in) + 2 H(+)(out) = Na(+)(out) + 2 H(+)(in). The catalysed reaction is K(+)(in) + H(+)(out) = K(+)(out) + H(+)(in). With respect to regulation, efflux is inhibited by the ionophore carbonyl cyanide 3-chlorophenylhydrazone (CCCP). In terms of biological role, proton-dependent efflux pump. Confers resistance to a broad spectrum of chemically unrelated substrates. Overexpression confers resistance to acriflavine, chloramphenicol, norfloxacin, ethidium bromide and tetraphenylphosphonium bromide (TPP). Can also export a broad range of quaternary ammonium compounds (QACs) and contribute to the intrinsic resistance of E.coli to these antimicrobial compounds. In addition to its role in multidrug resistance, MdtM likely plays a physiological role in alkaline pH homeostasis and in resistance to bile salts. May function in alkaline pH homeostasis when millimolar concentrations of sodium or potassium are present in the growth medium. When overexpressed, can confer a tolerance to alkaline pH values up to 9.75. Probably acts as a low-affinity antiporter that catalyzes the exchange of internal Na(+) and K(+) cations for extracellular protons to maintain a stable internal pH, acid relative to outside, during exposure to alkaline environments. Can also catalyze Rb(+)/H(+) and Li(+)/H(+) antiport, but not Ca(2+)/H(+) exchange. The exact stoichiometry of antiport is unknown. Finally, it could contribute to bile salt resistance by catalyzing the transport of bile salts out of the cell cytoplasm. Mediates a bile salt/H(+) exchange driven by the electrochemical gradient. Binds to cholate and deoxycholate with micromolar affinity and catalyzes both cholate/H(+) and deoxycholate/H(+) exchange reactions. The protein is Multidrug resistance protein MdtM of Escherichia coli (strain K12).